A 43-amino-acid polypeptide reads, in one-letter code: Potassium channel toxin gamma-KTx 4.4 (43 aa).

4 cysteine pairs are disulfide-bonded: cysteine 5-cysteine 23, cysteine 11-cysteine 34, cysteine 20-cysteine 39, and cysteine 24-cysteine 41.

This sequence belongs to the ergtoxin family. Gamma-KTx 4 subfamily. Expressed by the venom gland.

Its subcellular location is the secreted. In terms of biological role, reversibly blocks Kv11/ERG potassium channels. This Centruroides exilicauda (Bark scorpion) protein is Potassium channel toxin gamma-KTx 4.4.